The following is a 69-amino-acid chain: Beta-defensin 11 (69 aa).

The signal sequence occupies residues 1–23; that stretch reads MRTLCSLLLIGCLLFSYDTPVVG. 3 disulfide bridges follow: cysteine 35-cysteine 64, cysteine 42-cysteine 57, and cysteine 47-cysteine 65.

It belongs to the beta-defensin family.

It is found in the secreted. Has antibacterial activity. The sequence is that of Beta-defensin 11 (Defb11) from Rattus norvegicus (Rat).